A 472-amino-acid polypeptide reads, in one-letter code: Mixed lineage kinase domain-like protein (472 aa).

The tract at residues 1 to 143 (MDKLGQIIKL…QEDRQDAEED (143 aa)) is N-terminal bundle and brace (NBB); mediates INSP6 binding. A coiled-coil region spans residues 61-81 (LGRFDEVLKEANQQIEKFSKK). A Phosphoserine modification is found at serine 124. A coiled-coil region spans residues 138-229 (QDAEEDGNEN…VFNNPQAESV (92 aa)). The region spanning 192-456 (GPPWTKLKTS…DGRSLSGRER (265 aa)) is the Protein kinase domain. ATP-binding positions include 198 to 206 (LKTSKMSTI) and lysine 219. Phosphoserine; by RIPK3 occurs at positions 345 and 347. The residue at position 349 (threonine 349) is a Phosphothreonine; by RIPK3. Serine 352 is subject to Phosphoserine; by RIPK3.

The protein belongs to the protein kinase superfamily. As to quaternary structure, homooligomer. Homotrimer; forms homotrimers on necroptosis induction. Upon TNF-induced necrosis, forms in complex with PGAM5, RIPK1 and RIPK3. Within this complex, may play a role in the proper targeting of RIPK1-RIPK3 to its downstream effector PGAM5. Interacts with RIPK3; the interaction is direct and promotes its phosphorylation and subsequent activation. Phosphorylation by RIPK3 induces a conformational switch that is required for necroptosis. It also induces homotrimerization and localization to the plasma membrane. As to expression, highly expressed in thymus, colon, intestine, liver, spleen and lung. Expressed at much lower level in skeletal muscle, heart and kidney. Not detected in brain.

The protein localises to the cytoplasm. Its subcellular location is the cell membrane. The protein resides in the nucleus. Its activity is regulated as follows. Activated via binding to highly phosphorylated inositol phosphates such as inositolhexakisphosphate (InsP6) which mediates the release of an N-terminal auto-inhibitory region. Activation requires not only RIPK3-dependent phosphorylation but also binding to highly phosphorylated inositol phosphates. Pseudokinase that plays a key role in TNF-induced necroptosis, a programmed cell death process. Does not have protein kinase activity. Activated following phosphorylation by RIPK3, leading to homotrimerization, localization to the plasma membrane and execution of programmed necrosis characterized by calcium influx and plasma membrane damage. In addition to TNF-induced necroptosis, necroptosis can also take place in the nucleus in response to orthomyxoviruses infection: following ZBP1 activation, which senses double-stranded Z-RNA structures, nuclear RIPK3 catalyzes phosphorylation and activation of MLKL, promoting disruption of the nuclear envelope and leakage of cellular DNA into the cytosol. Binds to highly phosphorylated inositol phosphates such as inositolhexakisphosphate (InsP6) which is essential for its necroptotic function. The sequence is that of Mixed lineage kinase domain-like protein from Mus musculus (Mouse).